Reading from the N-terminus, the 386-residue chain is Diaminopimelate decarboxylase (386 aa).

Lys46 carries the post-translational modification N6-(pyridoxal phosphate)lysine. Pyridoxal 5'-phosphate is bound by residues Gly214 and 246–249 (EIGR). Substrate is bound by residues Arg249, Arg285, and Tyr289. Cys314 (proton donor) is an active-site residue. Glu315 and Tyr343 together coordinate substrate. Tyr343 is a binding site for pyridoxal 5'-phosphate.

Belongs to the Orn/Lys/Arg decarboxylase class-II family. LysA subfamily. Homodimer. Requires pyridoxal 5'-phosphate as cofactor.

It carries out the reaction meso-2,6-diaminopimelate + H(+) = L-lysine + CO2. It functions in the pathway amino-acid biosynthesis; L-lysine biosynthesis via DAP pathway; L-lysine from DL-2,6-diaminopimelate: step 1/1. In terms of biological role, specifically catalyzes the decarboxylation of meso-diaminopimelate (meso-DAP) to L-lysine. The polypeptide is Diaminopimelate decarboxylase (Thermotoga maritima (strain ATCC 43589 / DSM 3109 / JCM 10099 / NBRC 100826 / MSB8)).